Consider the following 203-residue polypeptide: Linker for activation of T-cells family member 2 (203 aa).

Over 1–6 (MSAELE) the chain is Extracellular. Residues 7–27 (LLWPVSGLLLLLLGATAWLCV) form a helical; Signal-anchor for type III membrane protein membrane-spanning segment. 2 S-palmitoyl cysteine lipidation sites follow: Cys-26 and Cys-29. Residues 28 to 203 (HCSRPGVKRN…NGDVAAAENI (176 aa)) lie on the Cytoplasmic side of the membrane. A Phosphotyrosine modification is found at Tyr-59. 2 positions are modified to phosphoserine: Ser-60 and Ser-95. Phosphotyrosine occurs at positions 139, 160, and 192. Residues 171–203 (ESKRTMGAPMSLSGSPDEEPDYVNGDVAAAENI) are disordered.

When phosphorylated, interacts with GRB2. May also interact with SOS1, GAB1 and CBL. In terms of processing, phosphorylated on tyrosines following cross-linking of BCR in B-cells, high affinity IgG receptor (FCGR1) in myeloid cells, or high affinity IgE receptor (FCER1) in mast cells; which induces the recruitment of GRB2. Strongly expressed in testis. Expressed in heart, spleen and lung. Present in B-cells and mast cells (at protein level).

Its subcellular location is the cell membrane. Its function is as follows. Involved in FCER1 (high affinity immunoglobulin epsilon receptor)-mediated signaling in mast cells. May also be involved in BCR (B-cell antigen receptor)-mediated signaling in B-cells and FCGR1 (high affinity immunoglobulin gamma Fc receptor I)-mediated signaling in myeloid cells. Couples activation of these receptors and their associated kinases with distal intracellular events through the recruitment of GRB2. This is Linker for activation of T-cells family member 2 (Lat2) from Mus musculus (Mouse).